We begin with the raw amino-acid sequence, 972 residues long: Glycine dehydrogenase (decarboxylating) (972 aa).

N6-(pyridoxal phosphate)lysine is present on lysine 713.

This sequence belongs to the GcvP family. In terms of assembly, the glycine cleavage system is composed of four proteins: P, T, L and H. It depends on pyridoxal 5'-phosphate as a cofactor.

The catalysed reaction is N(6)-[(R)-lipoyl]-L-lysyl-[glycine-cleavage complex H protein] + glycine + H(+) = N(6)-[(R)-S(8)-aminomethyldihydrolipoyl]-L-lysyl-[glycine-cleavage complex H protein] + CO2. The glycine cleavage system catalyzes the degradation of glycine. The P protein binds the alpha-amino group of glycine through its pyridoxal phosphate cofactor; CO(2) is released and the remaining methylamine moiety is then transferred to the lipoamide cofactor of the H protein. The chain is Glycine dehydrogenase (decarboxylating) from Aromatoleum aromaticum (strain DSM 19018 / LMG 30748 / EbN1) (Azoarcus sp. (strain EbN1)).